Consider the following 277-residue polypeptide: Formamidopyrimidine-DNA glycosylase (277 aa).

P2 (schiff-base intermediate with DNA) is an active-site residue. E3 (proton donor) is an active-site residue. The active-site Proton donor; for beta-elimination activity is the K58. Residues H94, R113, and R156 each contribute to the DNA site. The FPG-type zinc-finger motif lies at 241-277 (LVYGREGVPCPNCGAEHPIQRITQAGRSTFFCPTCQK). Residue R267 is the Proton donor; for delta-elimination activity of the active site.

It belongs to the FPG family. In terms of assembly, monomer. It depends on Zn(2+) as a cofactor.

It carries out the reaction Hydrolysis of DNA containing ring-opened 7-methylguanine residues, releasing 2,6-diamino-4-hydroxy-5-(N-methyl)formamidopyrimidine.. The enzyme catalyses 2'-deoxyribonucleotide-(2'-deoxyribose 5'-phosphate)-2'-deoxyribonucleotide-DNA = a 3'-end 2'-deoxyribonucleotide-(2,3-dehydro-2,3-deoxyribose 5'-phosphate)-DNA + a 5'-end 5'-phospho-2'-deoxyribonucleoside-DNA + H(+). Its function is as follows. Involved in base excision repair of DNA damaged by oxidation or by mutagenic agents. Acts as a DNA glycosylase that recognizes and removes damaged bases. Has a preference for oxidized purines, such as 7,8-dihydro-8-oxoguanine (8-oxoG). Has AP (apurinic/apyrimidinic) lyase activity and introduces nicks in the DNA strand. Cleaves the DNA backbone by beta-delta elimination to generate a single-strand break at the site of the removed base with both 3'- and 5'-phosphates. The polypeptide is Formamidopyrimidine-DNA glycosylase (Gluconobacter oxydans (strain 621H) (Gluconobacter suboxydans)).